The primary structure comprises 1736 residues: Collagen alpha-2(XI) chain (1736 aa).

The signal sequence occupies residues 1–27 (MERCSRCHHLLLLVLLLLWLSAAPAWA). Residues 57–228 (DVAYRVSRPA…ESCDQKELEC (172 aa)) enclose the Laminin G-like domain. Residues 215 to 486 (QAAYESCDQK…ILQQARVALR (272 aa)) are nonhelical region. Disordered stretches follow at residues 229–465 (EGGW…DKGP) and 485–1539 (LRGP…SPGG). Residues 258–270 (PQNQEPQAQSTES) are compositionally biased toward polar residues. Over residues 363-376 (ALSAETARSEAAAR) the composition is skewed to low complexity. Collagen-like domains lie at 399–447 (GPPG…GPPG), 487–545 (GPPG…ADGA), and 546–587 (RGMP…PPGE). Residues 400–413 (PPGPEGPAGFPGPP) are compositionally biased toward pro residues. Positions 487 to 1500 (GPPGPMGYTG…PGHPGPPGEV (1014 aa)) are triple-helical region. The segment covering 515–533 (DLGPQGPRGPQGLMGPPGK) has biased composition (low complexity). The span at 615-624 (KGPPGIPGPP) shows a compositional bias: pro residues. The span at 650–663 (QQGTPGTQGLPGPQ) shows a compositional bias: low complexity. Over residues 765–774 (RGEDGPEGPK) the composition is skewed to basic and acidic residues. The span at 842 to 861 (PTGPRGQRGPRGATGKSGAK) shows a compositional bias: low complexity. Positions 994-1003 (GTAGGPGLKG) are enriched in gly residues. Pro residues predominate over residues 1029–1040 (IGPPGRPGPQGP). Collagen-like domains are found at residues 1072-1127 (GPAG…ADGE) and 1128-1172 (PGAR…ETGD). A compositionally biased stretch (low complexity) spans 1115 to 1133 (PVGQPGAAGADGEPGARGP). Pro residues predominate over residues 1176–1187 (MGPPGPPGPRGP). Over residues 1217 to 1230 (ESGSPGVQGEPGVK) the composition is skewed to low complexity. Composition is skewed to basic and acidic residues over residues 1232–1241 (PRGERGEKGE) and 1287–1296 (DGAKGDRGED). 2 stretches are compositionally biased toward low complexity: residues 1341-1364 (PGAV…KPGP) and 1376-1386 (QQGRPGATGQA). Pro residues predominate over residues 1388–1397 (PPGPVGPPGL). Residues 1413 to 1422 (PGLIGLIGPP) show a composition bias toward low complexity. Positions 1444–1499 (GETGIPGASGPIGPGGPPGLPGPAGPKGAKGATGPAGPKGEKGVQGPPGHPGPPGE) constitute a Collagen-like 6 domain. Residues 1457-1467 (PGGPPGLPGPA) are compositionally biased toward pro residues. The span at 1469–1481 (PKGAKGATGPAGP) shows a compositional bias: low complexity. A propeptide spans 1501–1736 (IQPLPIQMPK…VLLGPVCFMG (236 aa)) (C-terminal propeptide). The 195-residue stretch at 1541–1735 (EEIFGSLDSL…GVLLGPVCFM (195 aa)) folds into the Fibrillar collagen NC1 domain. A disulfide bridge connects residues C1571 and C1603. D1589, N1591, Q1592, C1594, and D1597 together coordinate Ca(2+). N1604 and N1650 each carry an N-linked (GlcNAc...) asparagine glycan. 2 cysteine pairs are disulfide-bonded: C1612/C1733 and C1655/C1689.

This sequence belongs to the fibrillar collagen family. Trimers composed of three different chains: alpha 1(XI), alpha 2(XI), and alpha 3(XI). Alpha 3(XI) is a post-translational modification of alpha 1(II). Alpha 1(V) can also be found instead of alpha 3(XI)=1(II). Prolines at the third position of the tripeptide repeating unit (G-X-Y) are hydroxylated in some or all of the chains.

It is found in the secreted. The protein resides in the extracellular space. Its subcellular location is the extracellular matrix. Its function is as follows. May play an important role in fibrillogenesis by controlling lateral growth of collagen II fibrils. The chain is Collagen alpha-2(XI) chain (COL11A2) from Bos taurus (Bovine).